A 158-amino-acid polypeptide reads, in one-letter code: Small ribosomal subunit protein uS15 (158 aa).

Over residues 1 to 18 the composition is skewed to basic residues; that stretch reads MARMHARKRGKSGSKRPP. Residues 1 to 21 are disordered; that stretch reads MARMHARKRGKSGSKRPPRTA.

It belongs to the universal ribosomal protein uS15 family. As to quaternary structure, part of the 30S ribosomal subunit.

This is Small ribosomal subunit protein uS15 from Pyrococcus furiosus (strain ATCC 43587 / DSM 3638 / JCM 8422 / Vc1).